The sequence spans 573 residues: Putative inorganic phosphate transporter C1683.01 (573 aa).

The next 6 membrane-spanning stretches (helical) occupy residues 48-68 (MMLA…INLV), 100-120 (AASN…GDFF), 124-144 (FVYG…IAMP), 154-174 (MMWV…DYPM), 194-214 (LIFA…IILL), and 230-250 (LEGV…GVLI). Positions 261–270 (FKNSQQLNSG) are enriched in polar residues. Disordered regions lie at residues 261–280 (FKNS…TSLN) and 290–312 (PSVT…RSNT). 6 helical membrane-spanning segments follow: residues 348-368 (HLLG…GVNL), 397-417 (LIIA…LVEI), 422-442 (WIQL…AGRW), 451-471 (FACF…TTFI), 487-507 (GISA…FNFL), and 510-530 (IIGY…GILF).

This sequence belongs to the major facilitator superfamily. Sugar transporter (TC 2.A.1.1) family.

The protein resides in the endoplasmic reticulum membrane. Functionally, high-affinity transporter for external inorganic phosphate. This is Putative inorganic phosphate transporter C1683.01 from Schizosaccharomyces pombe (strain 972 / ATCC 24843) (Fission yeast).